Here is a 451-residue protein sequence, read N- to C-terminus: Adenylyltransferase and sulfurtransferase MOCS3 (451 aa).

Residues 42–62 (GEDSDEAEESSNDMPTPQTKL) form a disordered region. The span at 43-52 (EDSDEAEESS) shows a compositional bias: acidic residues. Position 60 is a phosphothreonine (Thr-60). ATP contacts are provided by residues Gly-99, Asp-120, 127–131 (SNLHR), Lys-144, and 188–189 (DN). 2 residues coordinate Zn(2+): Cys-229 and Cys-232. Catalysis depends on Cys-246, which acts as the Glycyl thioester intermediate; for adenylyltransferase activity. Zn(2+)-binding residues include Cys-304 and Cys-307. One can recognise a Rhodanese domain in the interval 353 to 449 (QSQPHLLLDV…WTGSVDATFP (97 aa)). Cys-408 acts as the Cysteine persulfide intermediate; for sulfurtransferase activity in catalysis.

In the N-terminal section; belongs to the HesA/MoeB/ThiF family. UBA4 subfamily. Requires Zn(2+) as cofactor.

The protein resides in the cytoplasm. It localises to the cytosol. It catalyses the reaction [molybdopterin-synthase sulfur-carrier protein]-C-terminal Gly-Gly + ATP + H(+) = [molybdopterin-synthase sulfur-carrier protein]-C-terminal Gly-Gly-AMP + diphosphate. The enzyme catalyses [molybdopterin-synthase sulfur-carrier protein]-C-terminal Gly-Gly-AMP + S-sulfanyl-L-cysteinyl-[cysteine desulfurase] + AH2 = [molybdopterin-synthase sulfur-carrier protein]-C-terminal-Gly-aminoethanethioate + L-cysteinyl-[cysteine desulfurase] + A + AMP + 2 H(+). It participates in tRNA modification; 5-methoxycarbonylmethyl-2-thiouridine-tRNA biosynthesis. The protein operates within cofactor biosynthesis; molybdopterin biosynthesis. Its function is as follows. Plays a central role in 2-thiolation of mcm(5)S(2)U at tRNA wobble positions of cytosolic tRNA(Lys), tRNA(Glu) and tRNA(Gln). Also essential during biosynthesis of the molybdenum cofactor. Acts by mediating the C-terminal thiocarboxylation of sulfur carriers URM1 and MOCS2A. Its N-terminus first activates URM1 and MOCS2A as acyl-adenylates (-COAMP), then the persulfide sulfur on the catalytic cysteine is transferred to URM1 and MOCS2A to form thiocarboxylation (-COSH) of their C-terminus. The reaction probably involves hydrogen sulfide that is generated from the persulfide intermediate and that acts as a nucleophile towards URM1 and MOCS2A. Subsequently, a transient disulfide bond is formed. Does not use thiosulfate as sulfur donor; NFS1 probably acting as a sulfur donor for thiocarboxylation reactions. In Drosophila persimilis (Fruit fly), this protein is Adenylyltransferase and sulfurtransferase MOCS3.